The primary structure comprises 850 residues: RPA-related protein RADX (850 aa).

The disordered stretch occupies residues 1 to 31 (MSGESGQPQPGPSHAGLYLEHPERDQAGVPG). The segment at residues 228-331 (WNSRKNFPAL…LISTMEICLN (104 aa)) is a DNA-binding region (OB). Disordered stretches follow at residues 575 to 612 (EAFW…MGSQ) and 632 to 671 (GPSA…GKSR). Residues 590–608 (GKEDHCHERGSKRSQDDRP) show a composition bias toward basic and acidic residues. Residues 643–668 (PHSSAQMKGSKHNTPSQESSTAYTTG) are compositionally biased toward polar residues.

The protein localises to the chromosome. Functionally, single-stranded DNA-binding protein recruited to replication forks to maintain genome stability. Prevents fork collapse by antagonizing the accumulation of RAD51 at forks to ensure the proper balance of fork remodeling and protection without interfering with the capacity of cells to complete homologous recombination of double-strand breaks. The sequence is that of RPA-related protein RADX from Mus musculus (Mouse).